The following is a 373-amino-acid chain: ATP phosphoribosyltransferase regulatory subunit (373 aa).

Belongs to the class-II aminoacyl-tRNA synthetase family. HisZ subfamily. Heteromultimer composed of HisG and HisZ subunits.

The protein localises to the cytoplasm. Its pathway is amino-acid biosynthesis; L-histidine biosynthesis; L-histidine from 5-phospho-alpha-D-ribose 1-diphosphate: step 1/9. Its function is as follows. Required for the first step of histidine biosynthesis. May allow the feedback regulation of ATP phosphoribosyltransferase activity by histidine. The polypeptide is ATP phosphoribosyltransferase regulatory subunit (Rhizobium johnstonii (strain DSM 114642 / LMG 32736 / 3841) (Rhizobium leguminosarum bv. viciae)).